We begin with the raw amino-acid sequence, 589 residues long: Leucine-rich repeat and immunoglobulin-like domain-containing nogo receptor-interacting protein 3 (589 aa).

The first 23 residues, 1–23, serve as a signal peptide directing secretion; sequence MTCWLHMLGLHLLLLPTAPLAAG. An LRRNT domain is found at 24-53; the sequence is CPARCECSASTRTVACGRRRLTAIPEGIPA. Residues 24–528 lie on the Extracellular side of the membrane; sequence CPARCECSAS…LDLTTILVST (505 aa). 11 LRR repeats span residues 54–75, 78–99, 102–123, 126–147, 150–171, 174–195, 206–227, 246–267, 270–291, 294–315, and 318–339; these read ETRM…DLAS, TLEE…AFAN, RLRV…VFTH, SLTL…SFQD, SLQR…AFAG, GLAE…SLGH, HLAI…SHLE, NLTS…ALRQ, HLTC…SFRD, RLRE…AFVG, and QIRL…TFHS. The N-linked (GlcNAc...) asparagine glycan is linked to N184. N-linked (GlcNAc...) asparagine glycosylation is found at N246, N256, and N275. An N-linked (GlcNAc...) asparagine glycan is attached at N323. The region spanning 351–405 is the LRRCT domain; it reads NPLACDCRLLWIVQRRKTLNFDGRLPACATPAEVRGDALHNLPDSVLFEYFVCRK. The 90-residue stretch at 406 to 495 folds into the Ig-like C2-type domain; it reads PKIRERRLQH…GNDTYFATLT (90 aa). A disulfide bond links C428 and C479. N-linked (GlcNAc...) asparagine glycosylation is found at N487, N501, and N509. Residues 529-549 traverse the membrane as a helical segment; that stretch reads AMGCITFLGVVLFCFLLLFVW. Over 550–589 the chain is Cytoplasmic; sequence SRGRGQHKNNFSVEYSFRKVDGPAAAAGQGGARKFNMKMI.

The protein localises to the membrane. The sequence is that of Leucine-rich repeat and immunoglobulin-like domain-containing nogo receptor-interacting protein 3 (Lingo3) from Mus musculus (Mouse).